A 1160-amino-acid polypeptide reads, in one-letter code: MHRRSSGSPVEDDAEDPLISRTPSEPSGPNAVEPSERARPQVARTGTSFDLRRDHTGASTPRSRNSSTWRMPSSATTTLLPPDPRSSSAAMPLTSQRLLAEASPDAQSRSRPARLRSPWPCSILTALTSLLASLFLCAILRSFAARQTGGDGCGIPVMSPAFLHMAGFDTEHTRFASKYNLYLYREQGVDPFNHENLGLNGAPVLFLPGNAGSYRQVRSLAAEASRHYFEVVRHDQERLRSGTRSLDFFMIDFNEDMAAFHGQTLLDQAEYVNEAVAYILSLYHDPKRSRRDPELPDPSSVIIIGHSMGGIVARTTLTMSNYQANSVNTIITMSAPHAKPPVSFESDVVHTYKQINDYWREAYSQTWANNNPLWHVTLISIAGGSRDTVVPSDYASISSLVPETHGFTVFTSTIPDVWIGMDHLSITWCDQFRKAIIKSLFEIVDVRRASQTKPRAERMRVFKKWYLTGLEPIAERTLSQKEPNTLLTLEDQSNTILPQGQRLILRELGHRRSPNVHLLPVPPQGVAGKKFTLLTNQRFDKSGEQGTLEVLFCSVFPLQNGKFSTVFTMNMDFSGGNVGSTRLACKNAAEDAIHLPASTHFSKHPYDRAEPFSYLQYDLEDLAEHQFVAVVDKAQSPTKGWLLAEFSDSSDAVIRARLGLGGLLSAGLKMRLPANRPMLTEVKIPALYSSLLDYNLKIVRRNHGNQQELFTPLLRQSIPDPHESKFFVNVKDVNVNLHGVAPFMPPPLREQAAVGGVSFQLWTDPSCDSTVDISLHVDIASSLGELVMRYRTVFAAFPILVVALVLRKQFQVYDQTGYFITFTEGLDSALRSSLPMLLLAMSLLASSLATSSRLPPSDDPFHWPLNSTESPIDFTKNDLLLGSQDAFFWFLVPLFGLICVGVCVILNYIALALLSVLAFFYGIFKSKSGYIKRDDKRLVPGFHSTSVTVTNEASNLPIFSAPTPRKRMINTAILLLLVSTTIPYQFAYLVACIVHLATCVRAQWHAKETKSTTHYNFFNYTHSIFILMLWILPINILVLLVWAHNLVVHWFMPFSSHHNVLSIMPFILLVEAMTTGTMIPRVTTRFKYITSLILFSIAIYAAVYGVSYAYLLHHLANIFAAWLVGVYFFSSGFSVRRLWRVLEGDEGTSNSEPGSMKKKP.

The interval 1–92 is disordered; that stretch reads MHRRSSGSPV…DPRSSSAAMP (92 aa). The span at 57–92 shows a compositional bias: polar residues; sequence GASTPRSRNSSTWRMPSSATTTLLPPDPRSSSAAMP. A glycan (N-linked (GlcNAc...) asparagine) is linked at Asn-65. The chain crosses the membrane as a helical span at residues 120–140; that stretch reads PCSILTALTSLLASLFLCAIL. Residue Ser-307 is part of the active site. A run of 2 helical transmembrane segments spans residues 786–806 and 832–852; these read LVMR…ALVL and SSLP…ATSS. Residue Asn-866 is glycosylated (N-linked (GlcNAc...) asparagine). A run of 2 helical transmembrane segments spans residues 886–906 and 973–993; these read AFFW…CVIL and ILLL…VACI. Asn-1019 is a glycosylation site (N-linked (GlcNAc...) asparagine). 4 consecutive transmembrane segments (helical) span residues 1023–1043, 1060–1080, 1092–1112, and 1115–1135; these read SIFI…LVWA, VLSI…TMIP, LILF…AYLL, and LANI…GFSV.

This sequence belongs to the GPI inositol-deacylase family.

It is found in the endoplasmic reticulum membrane. Functionally, involved in inositol deacylation of GPI-anchored proteins which plays important roles in the quality control and ER-associated degradation of GPI-anchored proteins. The protein is GPI inositol-deacylase (bst1) of Aspergillus terreus (strain NIH 2624 / FGSC A1156).